The primary structure comprises 270 residues: Glucosamine-6-phosphate deaminase (270 aa).

Catalysis depends on aspartate 72, which acts as the Proton acceptor; for enolization step. The active-site For ring-opening step is the aspartate 141. Histidine 143 (proton acceptor; for ring-opening step) is an active-site residue. The active-site For ring-opening step is glutamate 148.

This sequence belongs to the glucosamine/galactosamine-6-phosphate isomerase family. NagB subfamily.

The enzyme catalyses alpha-D-glucosamine 6-phosphate + H2O = beta-D-fructose 6-phosphate + NH4(+). It participates in amino-sugar metabolism; N-acetylneuraminate degradation; D-fructose 6-phosphate from N-acetylneuraminate: step 5/5. With respect to regulation, allosterically activated by N-acetylglucosamine 6-phosphate (GlcNAc6P). Functionally, catalyzes the reversible isomerization-deamination of glucosamine 6-phosphate (GlcN6P) to form fructose 6-phosphate (Fru6P) and ammonium ion. The protein is Glucosamine-6-phosphate deaminase of Bacteroides fragilis (strain ATCC 25285 / DSM 2151 / CCUG 4856 / JCM 11019 / LMG 10263 / NCTC 9343 / Onslow / VPI 2553 / EN-2).